The chain runs to 410 residues: LanC-like protein GCR2 (410 aa).

Cys-283, Cys-328, and His-329 together coordinate Zn(2+).

This sequence belongs to the LanC-like protein family. May interact (via C-terminus) with GPA1.

Its function is as follows. May play a role in abscisic acid (ABA) signaling. In Arabidopsis thaliana (Mouse-ear cress), this protein is LanC-like protein GCR2 (GCR2).